The primary structure comprises 126 residues: Holo-[acyl-carrier-protein] synthase (126 aa).

Mg(2+) is bound by residues Asp9 and Glu58.

It belongs to the P-Pant transferase superfamily. AcpS family. It depends on Mg(2+) as a cofactor.

Its subcellular location is the cytoplasm. It carries out the reaction apo-[ACP] + CoA = holo-[ACP] + adenosine 3',5'-bisphosphate + H(+). In terms of biological role, transfers the 4'-phosphopantetheine moiety from coenzyme A to a Ser of acyl-carrier-protein. The protein is Holo-[acyl-carrier-protein] synthase of Aliivibrio fischeri (strain MJ11) (Vibrio fischeri).